We begin with the raw amino-acid sequence, 224 residues long: 25 kDa integral membrane protein (224 aa).

Residues 1–12 (MKLSFTKVSLTN) are Cytoplasmic-facing. Residues 13-33 (ILILFNCLFIIFSMIVLTFGV) form a helical membrane-spanning segment. Over 34-52 (IPQIYLLKFANILHGVRPS) the chain is Extracellular. Residues 53–73 (IFPIVCFTGSFVIIVACVGII) traverse the membrane as a helical segment. Topologically, residues 74 to 80 (GLMKGGK) are cytoplasmic. The chain crosses the membrane as a helical span at residues 81–101 (CLLTMHIIALIIATIIDISTA). Over 102 to 189 (TLSAIKQNEF…LNKYVRYYID (88 aa)) the chain is Extracellular. N-linked (GlcNAc...) asparagine glycosylation is present at Asn120. A helical transmembrane segment spans residues 190–210 (ILIYLCFIFGFIKLIYSLFTF). The Cytoplasmic portion of the chain corresponds to 211 to 224 (TQRQRIFSEKTPVA).

It belongs to the tetraspanin (TM4SF) family.

It is found in the membrane. This is 25 kDa integral membrane protein from Schistosoma japonicum (Blood fluke).